The primary structure comprises 112 residues: MSLRAFMLCVCLLLQSVGARPASELQNLERLLQDQLSSTEHPEEDRLDRTREEPQLGGSSSREAADESALTRLFADLLRTSKRSWGRYKKGGMRSCFGVRLERIGSFSGLGC.

A signal peptide spans 1-19 (MSLRAFMLCVCLLLQSVGA). Positions 20–90 (RPASELQNLE…SKRSWGRYKK (71 aa)) are excised as a propeptide. Residues 33 to 67 (QDQLSSTEHPEEDRLDRTREEPQLGGSSSREAADE) form a disordered region. A compositionally biased stretch (basic and acidic residues) spans 40-54 (EHPEEDRLDRTREEP). Cysteine 96 and cysteine 112 form a disulfide bridge.

The protein belongs to the natriuretic peptide family. Spinal cord, kidney, ovary, heart and spleen, and to a lower extent in brain and liver.

The protein localises to the secreted. Exhibits natriuretic and vasodepressant activity. Has cGMP-stimulating activity. May help to regulate body fluid homeostasis in a variety of aquatic environments. This is C-type natriuretic peptide 3 from Oryzias latipes (Japanese rice fish).